The sequence spans 210 residues: Na(+)-translocating NADH-quinone reductase subunit D (210 aa).

Transmembrane regions (helical) follow at residues 42 to 62, 72 to 92, 103 to 123, 131 to 151, and 178 to 198; these read FVMTLAVMFVTALSNFFVSLI, IIVQMAIIASLVIVVDQILKA, VFVGLIITNCIVMGRAEAFAM, FIDGIGNGLGYGFVLMTVGFF, and NGLMLLAPSAFFLIGFMIWAI.

The protein belongs to the NqrDE/RnfAE family. In terms of assembly, composed of six subunits; NqrA, NqrB, NqrC, NqrD, NqrE and NqrF.

The protein localises to the cell inner membrane. The enzyme catalyses a ubiquinone + n Na(+)(in) + NADH + H(+) = a ubiquinol + n Na(+)(out) + NAD(+). NQR complex catalyzes the reduction of ubiquinone-1 to ubiquinol by two successive reactions, coupled with the transport of Na(+) ions from the cytoplasm to the periplasm. NqrA to NqrE are probably involved in the second step, the conversion of ubisemiquinone to ubiquinol. The sequence is that of Na(+)-translocating NADH-quinone reductase subunit D from Vibrio cholerae serotype O1 (strain M66-2).